The following is a 161-amino-acid chain: Endoribonuclease YbeY (161 aa).

Residues histidine 121, histidine 125, and histidine 131 each contribute to the Zn(2+) site.

This sequence belongs to the endoribonuclease YbeY family. It depends on Zn(2+) as a cofactor.

Its subcellular location is the cytoplasm. Its function is as follows. Single strand-specific metallo-endoribonuclease involved in late-stage 70S ribosome quality control and in maturation of the 3' terminus of the 16S rRNA. This Xanthomonas campestris pv. campestris (strain 8004) protein is Endoribonuclease YbeY.